A 194-amino-acid polypeptide reads, in one-letter code: ATP-dependent Clp protease proteolytic subunit (194 aa).

The active-site Nucleophile is S98. H123 is a catalytic residue.

It belongs to the peptidase S14 family. As to quaternary structure, fourteen ClpP subunits assemble into 2 heptameric rings which stack back to back to give a disk-like structure with a central cavity, resembling the structure of eukaryotic proteasomes.

The protein localises to the cytoplasm. It carries out the reaction Hydrolysis of proteins to small peptides in the presence of ATP and magnesium. alpha-casein is the usual test substrate. In the absence of ATP, only oligopeptides shorter than five residues are hydrolyzed (such as succinyl-Leu-Tyr-|-NHMec, and Leu-Tyr-Leu-|-Tyr-Trp, in which cleavage of the -Tyr-|-Leu- and -Tyr-|-Trp bonds also occurs).. Its function is as follows. Cleaves peptides in various proteins in a process that requires ATP hydrolysis. Has a chymotrypsin-like activity. Plays a major role in the degradation of misfolded proteins. The polypeptide is ATP-dependent Clp protease proteolytic subunit (Ruminiclostridium cellulolyticum (strain ATCC 35319 / DSM 5812 / JCM 6584 / H10) (Clostridium cellulolyticum)).